We begin with the raw amino-acid sequence, 181 residues long: Crossover junction endodeoxyribonuclease RuvC (181 aa).

Residues Asp-7, Glu-67, and Asp-139 contribute to the active site. Mg(2+)-binding residues include Asp-7, Glu-67, and Asp-139.

It belongs to the RuvC family. Homodimer which binds Holliday junction (HJ) DNA. The HJ becomes 2-fold symmetrical on binding to RuvC with unstacked arms; it has a different conformation from HJ DNA in complex with RuvA. In the full resolvosome a probable DNA-RuvA(4)-RuvB(12)-RuvC(2) complex forms which resolves the HJ. Mg(2+) is required as a cofactor.

It localises to the cytoplasm. It carries out the reaction Endonucleolytic cleavage at a junction such as a reciprocal single-stranded crossover between two homologous DNA duplexes (Holliday junction).. The RuvA-RuvB-RuvC complex processes Holliday junction (HJ) DNA during genetic recombination and DNA repair. Endonuclease that resolves HJ intermediates. Cleaves cruciform DNA by making single-stranded nicks across the HJ at symmetrical positions within the homologous arms, yielding a 5'-phosphate and a 3'-hydroxyl group; requires a central core of homology in the junction. The consensus cleavage sequence is 5'-(A/T)TT(C/G)-3'. Cleavage occurs on the 3'-side of the TT dinucleotide at the point of strand exchange. HJ branch migration catalyzed by RuvA-RuvB allows RuvC to scan DNA until it finds its consensus sequence, where it cleaves and resolves the cruciform DNA. The polypeptide is Crossover junction endodeoxyribonuclease RuvC (Bordetella avium (strain 197N)).